Here is a 360-residue protein sequence, read N- to C-terminus: Variable large protein 14 (360 aa).

An N-terminal signal peptide occupies residues 1–18 (MRKRISAIIMTLFMVLAS). Residue cysteine 19 is the site of N-palmitoyl cysteine attachment. Cysteine 19 carries S-diacylglycerol cysteine lipidation.

It belongs to the variable large protein (Vlp) family. Beta subfamily.

The protein localises to the cell outer membrane. The Vlp and Vsp proteins are antigenically distinct proteins, only one vlp or vsp gene is transcriptionally active at any one time. Switching between these genes is a mechanism of host immune response evasion. This chain is Variable large protein 14, found in Borrelia hermsii.